We begin with the raw amino-acid sequence, 491 residues long: Sodium-dependent glucose transporter 1 (491 aa).

11 consecutive transmembrane segments (helical) span residues 26–46 (FIFV…GILF), 52–72 (HLLL…VPWC), 81–101 (VMSV…IIIL), 119–139 (FALG…FLPL), 165–185 (LSYI…FILF), 210–230 (AVIF…VAYG), 255–275 (LFWG…TCLY), 277–297 (GTML…LVLF), 303–323 (LLWV…PSGF), 338–358 (SLFV…VGYL), and 365–385 (FPVL…LFPV). Disordered regions lie at residues 397–425 (AQYN…DEAQ) and 438–491 (NDQM…EKND). Residues 416 to 425 (MEEEDEDEAQ) are compositionally biased toward acidic residues. The span at 440-458 (QMKNSVTVISEDTPGNSAP) shows a compositional bias: polar residues.

The protein belongs to the major facilitator superfamily.

It localises to the apical cell membrane. May function as a sodium-dependent glucose transporter. Potential channels for urea in the inner medulla of kidney. The protein is Sodium-dependent glucose transporter 1 (mfsd4b) of Xenopus laevis (African clawed frog).